The chain runs to 333 residues: Ketol-acid reductoisomerase (NADP(+)) (333 aa).

In terms of domain architecture, KARI N-terminal Rossmann spans 2–182 (AKLYYEKDCN…GGARAGVLKT (181 aa)). NADP(+) contacts are provided by residues 25-28 (YGSQ), Ser-51, Ser-53, and 83-86 (DEKQ). His-108 is a catalytic residue. Residue Gly-134 participates in NADP(+) binding. The KARI C-terminal knotted domain occupies 183 to 328 (TFKEETETDL…KELRDMMSWS (146 aa)). Mg(2+) contacts are provided by Asp-191, Glu-195, Glu-227, and Glu-231. Ser-252 contributes to the substrate binding site.

It belongs to the ketol-acid reductoisomerase family. The cofactor is Mg(2+).

It catalyses the reaction (2R)-2,3-dihydroxy-3-methylbutanoate + NADP(+) = (2S)-2-acetolactate + NADPH + H(+). The catalysed reaction is (2R,3R)-2,3-dihydroxy-3-methylpentanoate + NADP(+) = (S)-2-ethyl-2-hydroxy-3-oxobutanoate + NADPH + H(+). The protein operates within amino-acid biosynthesis; L-isoleucine biosynthesis; L-isoleucine from 2-oxobutanoate: step 2/4. It functions in the pathway amino-acid biosynthesis; L-valine biosynthesis; L-valine from pyruvate: step 2/4. Involved in the biosynthesis of branched-chain amino acids (BCAA). Catalyzes an alkyl-migration followed by a ketol-acid reduction of (S)-2-acetolactate (S2AL) to yield (R)-2,3-dihydroxy-isovalerate. In the isomerase reaction, S2AL is rearranged via a Mg-dependent methyl migration to produce 3-hydroxy-3-methyl-2-ketobutyrate (HMKB). In the reductase reaction, this 2-ketoacid undergoes a metal-dependent reduction by NADPH to yield (R)-2,3-dihydroxy-isovalerate. The sequence is that of Ketol-acid reductoisomerase (NADP(+)) from Alkaliphilus metalliredigens (strain QYMF).